A 316-amino-acid polypeptide reads, in one-letter code: tRNA dimethylallyltransferase (316 aa).

An ATP-binding site is contributed by 14 to 21; sequence GPTAVGKT. 16–21 lines the substrate pocket; sequence TAVGKT. An interaction with substrate tRNA region spans residues 39-42; it reads DSMQ.

This sequence belongs to the IPP transferase family. In terms of assembly, monomer. The cofactor is Mg(2+).

It catalyses the reaction adenosine(37) in tRNA + dimethylallyl diphosphate = N(6)-dimethylallyladenosine(37) in tRNA + diphosphate. Catalyzes the transfer of a dimethylallyl group onto the adenine at position 37 in tRNAs that read codons beginning with uridine, leading to the formation of N6-(dimethylallyl)adenosine (i(6)A). The chain is tRNA dimethylallyltransferase from Bacillus cytotoxicus (strain DSM 22905 / CIP 110041 / 391-98 / NVH 391-98).